The sequence spans 356 residues: Hyaluronan and proteoglycan link protein 1 (356 aa).

Residues 1–9 (MRSLLLLVL) constitute a propeptide that is removed on maturation. The Ig-like V-type domain maps to 40–154 (PRLLVEAEQA…EGLEDDTAVV (115 aa)). A glycan (N-linked (GlcNAc...) asparagine) is linked at N58. 5 disulfides stabilise this stretch: C63-C141, C183-C254, C207-C228, C281-C351, and C306-C327. 2 Link domains span residues 161 to 256 (VVFP…FCFT) and 261 to 353 (GRFY…YCFR).

The protein belongs to the HAPLN family. Ubiquitously expressed.

It localises to the secreted. The protein localises to the extracellular space. It is found in the extracellular matrix. Functionally, stabilizes the aggregates of proteoglycan monomers with hyaluronic acid in the extracellular cartilage matrix. The polypeptide is Hyaluronan and proteoglycan link protein 1 (Hapln1) (Mus musculus (Mouse)).